Reading from the N-terminus, the 912-residue chain is Lateral signaling target protein 2 homolog (912 aa).

Residues 323-332 show a composition bias toward low complexity; the sequence is NVNTSNNSDN. 4 disordered regions span residues 323–360, 455–610, 664–745, and 769–846; these read NVNTSNNSDNSDSRVDDSPNDELRHESETRDNRNSSFY, ADSG…ESSQ, NSSP…ASSA, and GGGS…APPR. A compositionally biased stretch (basic and acidic residues) spans 333–355; the sequence is SDSRVDDSPNDELRHESETRDNR. Polar residues predominate over residues 455–468; the sequence is ADSGLGTANPSVDN. The segment covering 486–505 has biased composition (acidic residues); sequence SSEEGEIDEYDNEEDDEDSD. The span at 530 to 544 shows a compositional bias: basic residues; sequence YRTHKQQHHHRHRRS. Polar residues-rich tracts occupy residues 545 to 556 and 572 to 590; these read SGSIMSATSSRK and VPSNQGTSSKTYSNCDTSP. Over residues 591–610 the composition is skewed to low complexity; sequence SSGNQSECSSTSSTTGESSQ. The span at 682–699 shows a compositional bias: basic and acidic residues; the sequence is DKPKEPDPTDLFEFRASE. 4 stretches are compositionally biased toward polar residues: residues 705 to 717, 735 to 745, 780 to 801, and 822 to 834; these read PGQNSGGSSQSIY, PGTSPIRASSA, ERSVSLSETSIVVENNGGATDS, and SRSSPNSPVNGTS. The FYVE-type zinc-finger motif lies at 850–910; it reads DGDAPRCMAC…VCRDCYVREV (61 aa). The Zn(2+) site is built by Cys856, Cys859, Cys872, Cys875, Cys880, Cys883, Cys902, and Cys905.

This sequence belongs to the lst-2 family.

In terms of biological role, negative regulator of epidermal growth factor receptor (EGFR) signaling. In Aedes aegypti (Yellowfever mosquito), this protein is Lateral signaling target protein 2 homolog.